Reading from the N-terminus, the 480-residue chain is MEVVRYFTSNQKQPPATGPKDSIVQLPDIPPVYECNVEVALRFDSVLDPEKLQQSLKRLLEIGNWRQLGGRLRRRDTNSDACGYDLHVPVEFTTERPAFIYKTLESPAAVDEHPVACKMPQPTDPNKILFYNVRDALTPSMTRTHHPRKAQEWAESDLPPLSFEQLNFRDGTIILLLFPHILMDATGYGLFLKAWTCVLQGRMDDVPQCCGFSESITDMLCHKTPAESFTWHNHLLKGLDRLRFTARLLWENICGKEERIIRVPGKFITQTRDKTLADLSTSQDSPFVSHSDVLVAWFVRVVLASLNPQHQRTLVLTNAFDIRHMLPPERAYLQNSVFLAHTMLPVGEVVSNPASFLANEIRRSLVRERTEEQVQARCAWAKDVGIMPLLGSSDMLLCNVSNWSKGGLLDLDFGPAAITQRPGPCVPSSILNCSQMRGVTPEYGIILGKDSQDGWWMQWRLSKFCWAMIERELDTINQTR.

Residues His-180 and Asp-412 each act as proton acceptor in the active site.

It belongs to the plant acyltransferase family. As to quaternary structure, monomer.

Its pathway is secondary metabolite biosynthesis; terpenoid biosynthesis. O-acyltransferase; part of the gene cluster that mediates the biosynthesis of calidodehydroaustin, a fungal meroterpenoid. The first step of the pathway is the synthesis of 3,5-dimethylorsellinic acid by the polyketide synthase ausA. 3,5-dimethylorsellinic acid is then prenylated by the polyprenyl transferase ausN. Further epoxidation by the FAD-dependent monooxygenase ausM and cyclization by the probable terpene cyclase ausL lead to the formation of protoaustinoid A. Protoaustinoid A is then oxidized to spiro-lactone preaustinoid A3 by the combined action of the FAD-binding monooxygenases ausB and ausC, and the dioxygenase ausE. Acid-catalyzed keto-rearrangement and ring contraction of the tetraketide portion of preaustinoid A3 by ausJ lead to the formation of preaustinoid A4. The aldo-keto reductase ausK, with the help of ausH, is involved in the next step by transforming preaustinoid A4 into isoaustinone which is in turn hydroxylated by the P450 monooxygenase ausI to form austinolide. The cytochrome P450 monooxygenase ausG modifies austinolide to austinol. Austinol is further acetylated to austin by the O-acetyltransferase ausP, which spontaneously changes to dehydroaustin. The cytochrome P450 monooxygenase ausR then converts dehydroaustin is into 7-dehydrodehydroaustin. The hydroxylation catalyzed by ausR permits the O-acetyltransferase ausQ to add an additional acetyl group to the molecule, leading to the formation of acetoxydehydroaustin. The short chain dehydrogenase ausT catalyzes the reduction of the double bond present between carbon atoms 1 and 2 to convert 7-dehydrodehydroaustin into 1,2-dihydro-7-hydroxydehydroaustin. AusQ catalyzes not only an acetylation reaction but also the addition of the PKS ausV diketide product to 1,2-dihydro-7-hydroxydehydroaustin, forming precalidodehydroaustin. Finally, the iron/alpha-ketoglutarate-dependent dioxygenase converts precalidodehydroaustin into calidodehydroaustin. In Aspergillus calidoustus, this protein is O-acyltransferase ausP.